Reading from the N-terminus, the 73-residue chain is Toxin Td9 (73 aa).

An N-terminal signal peptide occupies residues isoleucine 1–cysteine 7. Residues lysine 8–glycine 70 enclose the LCN-type CS-alpha/beta domain. Intrachain disulfides connect cysteine 18–cysteine 69, cysteine 22–cysteine 44, cysteine 30–cysteine 50, and cysteine 34–cysteine 52. Lysine 71 carries the post-translational modification Lysine amide.

This sequence belongs to the long (4 C-C) scorpion toxin superfamily. Sodium channel inhibitor family. Beta subfamily. As to expression, expressed by the venom gland.

The protein resides in the secreted. Beta toxins bind voltage-independently at site-4 of sodium channels (Nav) and shift the voltage of activation toward more negative potentials thereby affecting sodium channel activation and promoting spontaneous and repetitive firing. This is Toxin Td9 from Tityus discrepans (Venezuelan scorpion).